The sequence spans 65 residues: Large ribosomal subunit protein bL31 (65 aa).

Zn(2+)-binding residues include Cys-16, Cys-18, Cys-36, and Cys-39.

The protein belongs to the bacterial ribosomal protein bL31 family. Type A subfamily. In terms of assembly, part of the 50S ribosomal subunit. The cofactor is Zn(2+).

Binds the 23S rRNA. The sequence is that of Large ribosomal subunit protein bL31 from Geobacter sulfurreducens (strain ATCC 51573 / DSM 12127 / PCA).